A 389-amino-acid polypeptide reads, in one-letter code: Transmembrane protease serine 11A (389 aa).

The Cytoplasmic portion of the chain corresponds to 1–23 (MEVAGYGTHNRDLKQWMVTLLSA). The helical; Signal-anchor for type II membrane protein transmembrane segment at 24-44 (LSLMMVVVTIGLLALFLVFDI) threads the bilayer. In terms of domain architecture, SEA spans 31-148 (VTIGLLALFL…SLVQVKDCGK (118 aa)). At 45–389 (QVNSNSGQKS…RHWIASKTGL (345 aa)) the chain is on the extracellular side. One can recognise a Peptidase S1 domain in the interval 158 to 388 (IVSGNPAAKG…YRHWIASKTG (231 aa)). C183 and C199 are disulfide-bonded. Active-site charge relay system residues include H198 and D243. A glycan (N-linked (GlcNAc...) asparagine) is linked at N274. Cystine bridges form between C308/C324 and C335/C364. Catalysis depends on S339, which acts as the Charge relay system.

Belongs to the peptidase S1 family.

Its subcellular location is the membrane. In terms of biological role, probable serine protease which may play a role in cellular senescence. Overexpression inhibits cell growth and induce G1 cell cycle arrest. The sequence is that of Transmembrane protease serine 11A (Tmprss11a) from Mus musculus (Mouse).